The chain runs to 348 residues: MVLLAQGACCSNQWLAAVLLSLCSCLPAGQSVDFPWAAVDNMLVRKGDTAVLRCYLEDGASKGAWLNRSSIIFAGGDKWSVDPRVSISTLNKRDYSLQIQNVDVTDDGPYTCSVQTQHTPRTMQVHLTVQVPPKIYDISNDMTINEGTNVTLTCLATGKPEPAISWRHISPSAKPFENGQYLDIYGITRDQAGEYECSAENDVSFPDVKKVRVVVNFAPTIQEIKSGTVTPGRSGLIRCEGAGVPPPAFEWYKGEKRLFNGQQGIIIQNFSTRSILTVTNVTQEHFGNYTCVAANKLGTTNASLPLNPPSTAQYGITGSACDLFSCWSLALTLSSVISIFYLKNAILQ.

An N-terminal signal peptide occupies residues 1 to 31 (MVLLAQGACCSNQWLAAVLLSLCSCLPAGQS). Ig-like C2-type domains are found at residues 32–128 (VDFP…VHLT), 133–215 (PKIY…RVVV), and 219–307 (PTIQ…LPLN). A disulfide bond links cysteine 54 and cysteine 112. N-linked (GlcNAc...) asparagine glycosylation is found at asparagine 67 and asparagine 149. Cystine bridges form between cysteine 154–cysteine 197 and cysteine 239–cysteine 291. Position 181 is a phosphotyrosine (tyrosine 181). N-linked (GlcNAc...) asparagine glycosylation is found at asparagine 269, asparagine 280, asparagine 288, and asparagine 301. Glycine 318 is lipidated: GPI-anchor amidated glycine. A propeptide spans 319–348 (SACDLFSCWSLALTLSSVISIFYLKNAILQ) (removed in mature form).

This sequence belongs to the immunoglobulin superfamily. IgLON family. In terms of processing, glycosylated. As to expression, highly expressed in brain.

The protein localises to the cell membrane. Functionally, may be involved in cell-adhesion. May function as a trans-neural growth-promoting factor in regenerative axon sprouting in the mammalian brain. The sequence is that of Neuronal growth regulator 1 (Negr1) from Rattus norvegicus (Rat).